The sequence spans 359 residues: Peptide chain release factor 1 (359 aa).

An N5-methylglutamine modification is found at Gln-235. The interval 282-306 is disordered; it reads RQRADSERSADRKSQVGSGDRSERI.

The protein belongs to the prokaryotic/mitochondrial release factor family. In terms of processing, methylated by PrmC. Methylation increases the termination efficiency of RF1.

It localises to the cytoplasm. Functionally, peptide chain release factor 1 directs the termination of translation in response to the peptide chain termination codons UAG and UAA. This is Peptide chain release factor 1 from Rhizobium rhizogenes (strain K84 / ATCC BAA-868) (Agrobacterium radiobacter).